A 197-amino-acid polypeptide reads, in one-letter code: Protein jagunal (197 aa).

Residues 1-39 lie on the Cytoplasmic side of the membrane; sequence MATRGGPMVAGTDGNDFEFRQRVAGTYQISLLNKSRLKY. A helical membrane pass occupies residues 40-60; it reads CIFFHALLFFVMLAKLTSDIL. Residues 61-78 are Lumenal-facing; that stretch reads DHLDIFVLEIEELEVPPP. The chain crosses the membrane as a helical span at residues 79 to 99; the sequence is LWWEYVWAASLLTSFLGLSAA. Residues 100–109 lie on the Cytoplasmic side of the membrane; the sequence is RGNKVREMQK. A helical membrane pass occupies residues 110–130; it reads YMVAILLFAILPLFYCFAYYF. Residues 131-159 lie on the Lumenal side of the membrane; sequence SDVWEFATLDKSVELDETDIFVWRGYPYG. A helical membrane pass occupies residues 160–180; sequence VFWYAFCFVGFQVHGFTLYFA. Over 181-197 the chain is Cytoplasmic; that stretch reads YNLVKAWKARTATRKFQ.

The protein belongs to the jagunal family.

The protein resides in the endoplasmic reticulum membrane. Required for endoplasmic reticulum organization and proper vesicular traffic during vitellogenesis. Required for oocyte and bristle growth. In Drosophila melanogaster (Fruit fly), this protein is Protein jagunal.